Consider the following 152-residue polypeptide: UPF0260 protein BR1477/BS1330_I1471 (152 aa).

Belongs to the UPF0260 family.

In Brucella suis biovar 1 (strain 1330), this protein is UPF0260 protein BR1477/BS1330_I1471.